Reading from the N-terminus, the 339-residue chain is Mitogen-activated protein kinase kinase kinase 18 (339 aa).

The region spanning 3 to 263 (WTRGKTLGRG…ASQLLNHPFL (261 aa)) is the Protein kinase domain. Residues 9–17 (LGRGSTATV) and Lys32 contribute to the ATP site. Asp131 (proton acceptor) is an active-site residue. The residue at position 301 (Ser301) is a Phosphoserine.

It belongs to the protein kinase superfamily. Ser/Thr protein kinase family. In terms of assembly, interacts with ABI1. Binds to MKK3. Associates with SRK2E within the nucleus. Autophosphorylated. Post-translationally, unstable protein degraded by the proteasome pathway; this degradation is promoted by ABI1, but blocked by ABA. As to expression, expressed in roots, leaves and flowers.

Its subcellular location is the nucleus. The catalysed reaction is L-seryl-[protein] + ATP = O-phospho-L-seryl-[protein] + ADP + H(+). It carries out the reaction L-threonyl-[protein] + ATP = O-phospho-L-threonyl-[protein] + ADP + H(+). Its activity is regulated as follows. Kinase activity is activated by abscisic acid (ABA). Inhibited by ABI1. Activated by SRK2E. Functionally, component of the abscisic acid (ABA) signaling pathway that acts as ABA signal transducer in the context of abiotic stresses. Triggers MPK1, MPK2, MPK7 and MPK14 activation in a MKK3-dependent manner and MPK6 activation in a MKK3-independent manner. Mediates the ABA-dependent activation of the MKK3-MPK7 module. Positive regulator of ABA responses leading to the induction of gene expression (e.g. RD29B and RAB18) and involved in various responses including stomatal development, stomatal movement, inhibition of germination and root growth. Promotes leaf senescence. This chain is Mitogen-activated protein kinase kinase kinase 18, found in Arabidopsis thaliana (Mouse-ear cress).